The chain runs to 113 residues: DNA-binding protein PTO0204 (113 aa).

This sequence belongs to the PDCD5 family.

The protein is DNA-binding protein PTO0204 of Picrophilus torridus (strain ATCC 700027 / DSM 9790 / JCM 10055 / NBRC 100828 / KAW 2/3).